The following is a 417-amino-acid chain: Hydroxysqualene dehydroxylase (417 aa).

This sequence belongs to the HpnE family.

The catalysed reaction is squalene + FAD + H2O + H(+) = hydroxysqualene + FADH2. It functions in the pathway secondary metabolite biosynthesis; hopanoid biosynthesis. Involved in the biosynthesis of the hopanoid precursor squalene (SQ) from farnesyl diphosphate (FPP). Catalyzes the third (last) step, the reduction of hydroxysqualene (HSQ) to SQ. This Sinorhizobium fredii (strain NBRC 101917 / NGR234) protein is Hydroxysqualene dehydroxylase.